The primary structure comprises 254 residues: Proteasome activator complex subunit 3 (254 aa).

Ala-2 carries the post-translational modification N-acetylalanine. Phosphoserine occurs at positions 17 and 24. N6-acetyllysine; by P300/CBP is present on Lys-195. Phosphoserine; by CHEK2 is present on Ser-247.

Belongs to the PA28 family. In terms of assembly, homoheptamer; the stability of the heptamer is essential for the specific activation of the trypsine-like subunit and inhibition of the chymotrypsin-like and postglutamyl-preferring (PGPH) subunits of the proteasome. Interacts with p53/TP53, MDM2 and MAP3K3. Associates with the proteasome. Interacts with CCAR2. Interacts with PSME3IP1 (via C-terminus); the interaction is direct and promotes the association of PSME3 with the 20S proteasome. Interacts with COIL; the interaction is inhibited by PSME3IP1. Post-translationally, phosphorylated by MAP3K3. Phosphorylation at Ser-247 promotes its association with CCAR2. Acetylation at the major site Lys-195 is important for oligomerization and ability to degrade its target substrates. Deacetylated by SIRT1.

The protein localises to the nucleus. It localises to the cytoplasm. Subunit of the 11S REG-gamma (also called PA28-gamma) proteasome regulator, a doughnut-shaped homoheptamer which associates with the proteasome. 11S REG-gamma activates the trypsin-like catalytic subunit of the proteasome but inhibits the chymotrypsin-like and postglutamyl-preferring (PGPH) subunits. Facilitates the MDM2-p53/TP53 interaction which promotes ubiquitination- and MDM2-dependent proteasomal degradation of p53/TP53, limiting its accumulation and resulting in inhibited apoptosis after DNA damage. May also be involved in cell cycle regulation. Mediates CCAR2 and CHEK2-dependent SIRT1 inhibition. In Pongo abelii (Sumatran orangutan), this protein is Proteasome activator complex subunit 3 (PSME3).